Here is a 341-residue protein sequence, read N- to C-terminus: Elongation factor Ts (341 aa).

Residues 80-83 (TDFV) form an involved in Mg(2+) ion dislocation from EF-Tu region.

Belongs to the EF-Ts family.

The protein localises to the cytoplasm. Associates with the EF-Tu.GDP complex and induces the exchange of GDP to GTP. It remains bound to the aminoacyl-tRNA.EF-Tu.GTP complex up to the GTP hydrolysis stage on the ribosome. The chain is Elongation factor Ts from Lactobacillus johnsonii (strain CNCM I-12250 / La1 / NCC 533).